Consider the following 283-residue polypeptide: NAD kinase (283 aa).

The Proton acceptor role is filled by Asp-67. NAD(+) contacts are provided by residues Asp-67–Gly-68, Asn-141–Asp-142, Arg-152, Asp-171, Thr-182–Ser-187, and Gln-241.

This sequence belongs to the NAD kinase family. A divalent metal cation is required as a cofactor.

It is found in the cytoplasm. The enzyme catalyses NAD(+) + ATP = ADP + NADP(+) + H(+). Its function is as follows. Involved in the regulation of the intracellular balance of NAD and NADP, and is a key enzyme in the biosynthesis of NADP. Catalyzes specifically the phosphorylation on 2'-hydroxyl of the adenosine moiety of NAD to yield NADP. This Heliobacterium modesticaldum (strain ATCC 51547 / Ice1) protein is NAD kinase.